The following is a 250-amino-acid chain: Kallikrein-9 (250 aa).

Positions 1–15 (MKLGLLCALLSLLAG) are cleaved as a signal peptide. One can recognise a Peptidase S1 domain in the interval 23-249 (AIGAEECRPN…YLDWIQEIME (227 aa)). Cystine bridges form between Cys-29–Cys-164, Cys-48–Cys-64, Cys-136–Cys-238, Cys-143–Cys-210, Cys-175–Cys-189, and Cys-200–Cys-225. Active-site charge relay system residues include His-63 and Asp-111. N-linked (GlcNAc...) asparagine glycosylation is found at Asn-131 and Asn-166. Ser-204 acts as the Charge relay system in catalysis. Asn-211 is a glycosylation site (N-linked (GlcNAc...) asparagine).

This sequence belongs to the peptidase S1 family. Kallikrein subfamily. As to expression, skin, thymus, trachea, cerebellum and spinal cord.

Its subcellular location is the secreted. The protein is Kallikrein-9 (KLK9) of Homo sapiens (Human).